A 130-amino-acid polypeptide reads, in one-letter code: MAKTVKKSGPKKAKRNVPNGVAHIQSTFNNTIVSITDTTGEVISWSSAGASGFKGARKGTPFAAQTAAEAAARRALDQGMRQIEVLVRGPGSGRETAIRALQVAGLEITLIRDVTPLPHNGCRRPKRRRV.

It belongs to the universal ribosomal protein uS11 family. Part of the 30S ribosomal subunit. Interacts with proteins S7 and S18. Binds to IF-3.

Functionally, located on the platform of the 30S subunit, it bridges several disparate RNA helices of the 16S rRNA. Forms part of the Shine-Dalgarno cleft in the 70S ribosome. The chain is Small ribosomal subunit protein uS11 from Synechococcus sp. (strain WH7803).